We begin with the raw amino-acid sequence, 144 residues long: Cytochrome c oxidase subunit 4 isoform 1, mitochondrial (144 aa).

Over 1–73 (SVVKSEDFSL…SFAEMNRGSN (73 aa)) the chain is Mitochondrial matrix. N6-acetyllysine; alternate is present on lysine 4. Lysine 4 is modified (N6-succinyllysine; alternate). At lysine 28 the chain carries N6-acetyllysine. Residues serine 31 and serine 33 each carry the phosphoserine modification. At lysine 35 the chain carries N6-acetyllysine; alternate. Lysine 35 carries the N6-succinyllysine; alternate modification. Lysine 42 bears the N6-acetyllysine mark. Residues 74–99 (EWKTVVGGAMFFIGFTALVIMWQKHY) form a helical membrane-spanning segment. Residues 100–144 (VYGPLPQSFDKEWVAKQTKRMLDMKVNPIQGLASKWDYEKNEWKK) are Mitochondrial intermembrane-facing.

It belongs to the cytochrome c oxidase IV family. Component of the cytochrome c oxidase (complex IV, CIV), a multisubunit enzyme composed of 14 subunits. The complex is composed of a catalytic core of 3 subunits MT-CO1, MT-CO2 and MT-CO3, encoded in the mitochondrial DNA, and 11 supernumerary subunits COX4I, COX5A, COX5B, COX6A, COX6B, COX6C, COX7A, COX7B, COX7C, COX8 and NDUFA4, which are encoded in the nuclear genome. The complex exists as a monomer or a dimer and forms supercomplexes (SCs) in the inner mitochondrial membrane with NADH-ubiquinone oxidoreductase (complex I, CI) and ubiquinol-cytochrome c oxidoreductase (cytochrome b-c1 complex, complex III, CIII), resulting in different assemblies (supercomplex SCI(1)III(2)IV(1) and megacomplex MCI(2)III(2)IV(2)). Interacts with PHB2; the interaction decreases in absence of SPHK2. Interacts with AFG1L. Interacts with ABCB7; this interaction allows the regulation of cellular iron homeostasis and cellular reactive oxygen species (ROS) levels in cardiomyocytes. Interacts with FLVCR2; this interaction occurs in the absence of heme and is disrupted upon heme binding. Interacts with IRGC.

It is found in the mitochondrion inner membrane. It functions in the pathway energy metabolism; oxidative phosphorylation. Functionally, component of the cytochrome c oxidase, the last enzyme in the mitochondrial electron transport chain which drives oxidative phosphorylation. The respiratory chain contains 3 multisubunit complexes succinate dehydrogenase (complex II, CII), ubiquinol-cytochrome c oxidoreductase (cytochrome b-c1 complex, complex III, CIII) and cytochrome c oxidase (complex IV, CIV), that cooperate to transfer electrons derived from NADH and succinate to molecular oxygen, creating an electrochemical gradient over the inner membrane that drives transmembrane transport and the ATP synthase. Cytochrome c oxidase is the component of the respiratory chain that catalyzes the reduction of oxygen to water. Electrons originating from reduced cytochrome c in the intermembrane space (IMS) are transferred via the dinuclear copper A center (CU(A)) of subunit 2 and heme A of subunit 1 to the active site in subunit 1, a binuclear center (BNC) formed by heme A3 and copper B (CU(B)). The BNC reduces molecular oxygen to 2 water molecules using 4 electrons from cytochrome c in the IMS and 4 protons from the mitochondrial matrix. The sequence is that of Cytochrome c oxidase subunit 4 isoform 1, mitochondrial (COX4I1) from Pan troglodytes (Chimpanzee).